The primary structure comprises 116 residues: Iron-sulfur cluster insertion protein ErpA (116 aa).

The iron-sulfur cluster site is built by cysteine 44, cysteine 108, and cysteine 110.

It belongs to the HesB/IscA family. Homodimer. It depends on iron-sulfur cluster as a cofactor.

Functionally, required for insertion of 4Fe-4S clusters for at least IspG. In Pseudomonas syringae pv. syringae (strain B728a), this protein is Iron-sulfur cluster insertion protein ErpA.